We begin with the raw amino-acid sequence, 286 residues long: Interferon-induced 35 kDa protein (286 aa).

Residues L5–L26 form a leucine-zipper region. 2 consecutive NID domains span residues A81–D170 and F183–E266.

The protein belongs to the NMI family. In terms of assembly, homodimer. Also interacts with BATF. Interacts with TRIM21. Interacts with NMI; the interaction is direct and is facilitated by TRIM21. Post-translationally, phosphorylated. Dephosphorylation correlates with the formation of a complex with NMI. In terms of tissue distribution, expressed in a wide range of cell types, including fibroblasts, macrophages, and epithelial cells.

The protein localises to the cytoplasm. It is found in the nucleus. The protein resides in the secreted. In terms of biological role, acts as a signaling pathway regulator involved in innate immune system response. In response to interferon IFN-alpha, associates in a complex with signaling pathway regulator NMI to regulate immune response; the complex formation prevents proteasome-mediated degradation of IFI35 and correlates with IFI35 dephosphorylation. In complex with NMI, inhibits virus-triggered type I interferon/IFN-beta production. In complex with NMI, negatively regulates nuclear factor NF-kappa-B signaling by inhibiting the nuclear translocation, activation and transcription of the NF-kappa-B subunit p65/RELA, resulting in the inhibition of endothelial cell proliferation, migration and re-endothelialization of injured arteries. Beside its role as an intracellular signaling pathway regulator, also functions extracellularly as damage-associated molecular patterns (DAMPs) to promote inflammation when actively released by macrophage to the extracellular space during cell injury and pathogen invasion. Macrophage-secreted IFI35 activates NF-kappa-B signaling in adjacent macrophages through Toll-like receptor 4/TLR4 activation, thereby inducing NF-kappa-B translocation from the cytoplasm into the nucleus which promotes the release of pro-inflammatory cytokines. The chain is Interferon-induced 35 kDa protein from Homo sapiens (Human).